A 178-amino-acid chain; its full sequence is Bifunctional protein PyrR (178 aa).

The PRPP-binding signature appears at 99 to 111 (IIIIDDVLYTCRT).

This sequence belongs to the purine/pyrimidine phosphoribosyltransferase family. PyrR subfamily. In terms of assembly, homodimer and homohexamer; in equilibrium.

The enzyme catalyses UMP + diphosphate = 5-phospho-alpha-D-ribose 1-diphosphate + uracil. Functionally, regulates transcriptional attenuation of the pyrimidine nucleotide (pyr) operon by binding in a uridine-dependent manner to specific sites on pyr mRNA. This disrupts an antiterminator hairpin in the RNA and favors formation of a downstream transcription terminator, leading to a reduced expression of downstream genes. Also displays a weak uracil phosphoribosyltransferase activity which is not physiologically significant. This chain is Bifunctional protein PyrR, found in Clostridium beijerinckii (strain ATCC 51743 / NCIMB 8052) (Clostridium acetobutylicum).